The following is an 814-amino-acid chain: MKTKIPDAVLAAEVSRRGLVKTTAIGGLAMASSALTLPFSRIAHAVDSAIPTKSDEKVIWSACTVNCGSRCPLRMHVVDGEIKYVETDNTGDDNYDGLHQVRACLRGRSMRRRVYNPDRLKYPMKRVGARGEGKFERISWEEAYDIIATNMQRLIKEYGNESIYLNYGTGTLGGTMTRSWPPGNTLVARLMNCCGGYLNHYGDYSSAQIAEGLNYTYGGWADGNSPSDIENSKLVVLFGNNPGETRMSGGGVTYYLEQARQKSNARMIIIDPRYTDTGAGREDEWIPIRPGTDAALVNGLAYVMITENLVDQAFLDKYCVGYDEKTLPASAPKNGHYKAYILGEGPDGVAKTPEWASQITGVPADKIIKLAREIGSTKPAFISQGWGPQRHANGEIATRAISMLAILTGNVGINGGNSGAREGSYSLPFVRMPTLENPIQTSISMFMWTDAIERGPEMTALRDGVRGKDKLDVPIKMIWNYAGNCLINQHSEINRTHEILQDDKKCELIVVIDCHMTSSAKYADILLPDCTASEQMDFALDASCGNMSYVIFNDQVIKPRFECKTIYEMTSELAKRLGVEQQFTEGRTQEEWMRHLYAQSREAIPELPTFEEFRKQGIFKKRDPQGHHVAYKAFREDPQANPLTTPSGKIEIYSQALADIAATWELPEGDVIDPLPIYTPGFESYQDPLNKQYPLQLTGFHYKSRVHSTYGNVDVLKAACRQEMWINPLDAQKRGIHNGDKVRIFNDRGEVHIEAKVTPRMMPGVVALGEGAWYDPDAKRVDKGGCINVLTTQRPSPLAKGNPSHTNLVQVEKV.

Residues 1–45 constitute a signal peptide (tat-type signal); the sequence is MKTKIPDAVLAAEVSRRGLVKTTAIGGLAMASSALTLPFSRIAHA. One can recognise a 4Fe-4S Mo/W bis-MGD-type domain in the interval 56 to 118; it reads EKVIWSACTV…SMRRRVYNPD (63 aa). Cysteine 63, cysteine 67, cysteine 71, and cysteine 104 together coordinate [4Fe-4S] cluster. Mo-bis(molybdopterin guanine dinucleotide)-binding positions include 172–176, serine 205, 244–245, 270–271, 291–293, 386–387, arginine 390, asparagine 488, 512–513, histidine 701, 707–709, asparagine 788, and 804–805; these read LGGTM, ET, ID, GTD, WG, HST, and SH.

It belongs to the prokaryotic molybdopterin-containing oxidoreductase family. As to quaternary structure, heterotrimeric enzyme composed of a catalytic heterodimer (DmsAB) and a membrane anchor protein (DmsC). It depends on [4Fe-4S] cluster as a cofactor. Mo-bis(molybdopterin guanine dinucleotide) serves as cofactor. Post-translationally, exported by the Tat system. The position of the signal peptide cleavage has been experimentally proven. Can also be exported by the Sec system.

It localises to the cell membrane. It carries out the reaction dimethyl sulfide + a menaquinone + H2O = dimethyl sulfoxide + a menaquinol. Inhibited by dithionite, sodium hydrogensulfite and tungstate. Functionally, catalyzes the reduction of dimethyl sulfoxide (DMSO) to dimethyl sulfide (DMS). DMSO reductase serves as the terminal reductase under anaerobic conditions, with DMSO being the terminal electron acceptor. Terminal reductase during anaerobic growth on various sulfoxides and N-oxide compounds. Allows E.coli to grow anaerobically on DMSO as respiratory oxidant. The sequence is that of Dimethyl sulfoxide reductase DmsA (dmsA) from Escherichia coli (strain K12).